Reading from the N-terminus, the 231-residue chain is Putative N-acetylmannosamine-6-phosphate 2-epimerase (231 aa).

This sequence belongs to the NanE family.

It carries out the reaction an N-acyl-D-glucosamine 6-phosphate = an N-acyl-D-mannosamine 6-phosphate. The protein operates within amino-sugar metabolism; N-acetylneuraminate degradation; D-fructose 6-phosphate from N-acetylneuraminate: step 3/5. Functionally, converts N-acetylmannosamine-6-phosphate (ManNAc-6-P) to N-acetylglucosamine-6-phosphate (GlcNAc-6-P). This is Putative N-acetylmannosamine-6-phosphate 2-epimerase from Listeria monocytogenes serotype 4b (strain CLIP80459).